The chain runs to 262 residues: ATP synthase subunit a (262 aa).

6 consecutive transmembrane segments (helical) span residues 50-70 (TMIMTWITMALVLLFAWACTK), 107-127 (MMPIIVTFFIYIVFANLLGLI), 141-161 (FGLALIVVLLIHYHGLKANGV), 194-214 (LYGNIFAGEVLIAVLLGLINI), 218-238 (VFGGFIPSVIWLAFSVFVGFV), and 239-259 (QAFVFSMLTIAYVSQFAAHEA).

The protein belongs to the ATPase A chain family. F-type ATPases have 2 components, CF(1) - the catalytic core - and CF(0) - the membrane proton channel. CF(1) has five subunits: alpha(3), beta(3), gamma(1), delta(1), epsilon(1). CF(0) has three main subunits: a(1), b(2) and c(9-12). The alpha and beta chains form an alternating ring which encloses part of the gamma chain. CF(1) is attached to CF(0) by a central stalk formed by the gamma and epsilon chains, while a peripheral stalk is formed by the delta and b chains.

It is found in the cell membrane. Key component of the proton channel; it plays a direct role in the translocation of protons across the membrane. The protein is ATP synthase subunit a of Desulforamulus reducens (strain ATCC BAA-1160 / DSM 100696 / MI-1) (Desulfotomaculum reducens).